Consider the following 366-residue polypeptide: UDP-N-acetylglucosamine--N-acetylmuramyl-(pentapeptide) pyrophosphoryl-undecaprenol N-acetylglucosamine transferase (366 aa).

Residues 10–12 (TGG), N124, S195, and Q295 each bind UDP-N-acetyl-alpha-D-glucosamine.

It belongs to the glycosyltransferase 28 family. MurG subfamily.

Its subcellular location is the cell membrane. It carries out the reaction di-trans,octa-cis-undecaprenyl diphospho-N-acetyl-alpha-D-muramoyl-L-alanyl-D-glutamyl-meso-2,6-diaminopimeloyl-D-alanyl-D-alanine + UDP-N-acetyl-alpha-D-glucosamine = di-trans,octa-cis-undecaprenyl diphospho-[N-acetyl-alpha-D-glucosaminyl-(1-&gt;4)]-N-acetyl-alpha-D-muramoyl-L-alanyl-D-glutamyl-meso-2,6-diaminopimeloyl-D-alanyl-D-alanine + UDP + H(+). It functions in the pathway cell wall biogenesis; peptidoglycan biosynthesis. In terms of biological role, cell wall formation. Catalyzes the transfer of a GlcNAc subunit on undecaprenyl-pyrophosphoryl-MurNAc-pentapeptide (lipid intermediate I) to form undecaprenyl-pyrophosphoryl-MurNAc-(pentapeptide)GlcNAc (lipid intermediate II). This is UDP-N-acetylglucosamine--N-acetylmuramyl-(pentapeptide) pyrophosphoryl-undecaprenol N-acetylglucosamine transferase from Bacillus licheniformis (strain ATCC 14580 / DSM 13 / JCM 2505 / CCUG 7422 / NBRC 12200 / NCIMB 9375 / NCTC 10341 / NRRL NRS-1264 / Gibson 46).